The sequence spans 244 residues: Adenosylcobinamide-GDP ribazoletransferase (244 aa).

The next 5 helical transmembrane spans lie at 33-53 (WFAVVGLLVGALVAALGWLGA), 57-77 (PWLAALLMLVTWVWVTGGLHL), 109-129 (FAVITLALQLLAKLVLLMLAV), 132-152 (GVGWSALVLLPAWARLGAVWW), and 176-196 (FWLSWLLLAALSAWLAPVLLL).

Belongs to the CobS family. Mg(2+) is required as a cofactor.

Its subcellular location is the cell inner membrane. The catalysed reaction is alpha-ribazole + adenosylcob(III)inamide-GDP = adenosylcob(III)alamin + GMP + H(+). It carries out the reaction alpha-ribazole 5'-phosphate + adenosylcob(III)inamide-GDP = adenosylcob(III)alamin 5'-phosphate + GMP + H(+). Its pathway is cofactor biosynthesis; adenosylcobalamin biosynthesis; adenosylcobalamin from cob(II)yrinate a,c-diamide: step 7/7. Functionally, joins adenosylcobinamide-GDP and alpha-ribazole to generate adenosylcobalamin (Ado-cobalamin). Also synthesizes adenosylcobalamin 5'-phosphate from adenosylcobinamide-GDP and alpha-ribazole 5'-phosphate. The sequence is that of Adenosylcobinamide-GDP ribazoletransferase from Laribacter hongkongensis (strain HLHK9).